The chain runs to 159 residues: MTQLTHINTAGEAHMVDVSAKNETVREARAEAFVDMQAATLAMIIDGSHHKGDVFATARIAGIQAAKKTWELIPLCHPLLLTKVEVKLEAQPEHNRVRIETCCRLTGKTGVEMEALTAASVAALTIYDMCKAVQKDMVIGPVRLLTKSGGKSGDFKVDI.

Residues 75–77 (LCH) and 113–114 (ME) contribute to the substrate site. Asp-128 is an active-site residue.

This sequence belongs to the MoaC family. Homohexamer; trimer of dimers.

The enzyme catalyses (8S)-3',8-cyclo-7,8-dihydroguanosine 5'-triphosphate = cyclic pyranopterin phosphate + diphosphate. It participates in cofactor biosynthesis; molybdopterin biosynthesis. In terms of biological role, catalyzes the conversion of (8S)-3',8-cyclo-7,8-dihydroguanosine 5'-triphosphate to cyclic pyranopterin monophosphate (cPMP). This is Cyclic pyranopterin monophosphate synthase from Yersinia pseudotuberculosis serotype IB (strain PB1/+).